The primary structure comprises 512 residues: Bestrophin-2 (512 aa).

Over 1-31 (MTVTYTARVAKARFGGFSKLLLLWRGSIYKL) the chain is Cytoplasmic. Residue alanine 10 coordinates Ca(2+). The chain crosses the membrane as a helical span at residues 32–51 (LWRELLCFLGLFMALSAAYR). At 52 to 60 (FVLTEEQKR) the chain is on the extracellular side. A helical transmembrane segment spans residues 61-82 (YFEKLVLYCDRYASLIPVSFVL). The Cytoplasmic segment spans residues 83–238 (GFYVTLVVHR…WISVPLVYTQ (156 aa)). The helical transmembrane segment at 239–255 (VVTIAVYSYFLACLIGR) threads the bilayer. The Extracellular segment spans residues 256 to 274 (QFLDPAQGYKDHDLDLCVP). The helical transmembrane segment at 275–288 (IFTLLQFFFYAGWL) threads the bilayer. At 289 to 512 (KVAEQLINPF…PIGEEEESLA (224 aa)) the chain is on the cytoplasmic side. Ca(2+) contacts are provided by glutamine 293, asparagine 296, aspartate 301, and aspartate 304. Residues 453–512 (VDLGQPEPESEPITGPESPALVPAPRAPSEPLTVVPLSGTRGPAPPWLPSPIGEEEESLA) form a disordered region.

The protein belongs to the anion channel-forming bestrophin (TC 1.A.46) family. Calcium-sensitive chloride channel subfamily. As to quaternary structure, pentamer. Interacts with GLUL; this interaction tethers a fraction of GLUL to the membrane, causing a decrease of cytosolic glutamine synthase (GS) activity and inhibits the chloride channel activity of BEST2 by affecting the gating at the aperture in the absence of intracellular glutamate.

Its subcellular location is the cell membrane. It localises to the basolateral cell membrane. The enzyme catalyses chloride(in) = chloride(out). It carries out the reaction iodide(out) = iodide(in). The catalysed reaction is hydrogencarbonate(in) = hydrogencarbonate(out). It catalyses the reaction L-glutamate(out) = L-glutamate(in). The enzyme catalyses L-glutamine(out) = L-glutamine(in). With respect to regulation, chloride channel activity is allosterically inhibited by GLUL/glutamine synthase (GS) which affects the gating at the aperture in the absence of intracellular glutamate. Inhibitory effect of GLUL is relieved upon increasing of intracellular level of L-glutamate. Ligand-gated anion channel that allows the movement of anions across cell membranes when activated by calcium (Ca2+). Transports a large specter of anions, namely mediates the movement of chloride, L-glutamate and iodide. Calcium-binding triggers the dilation of the aperture, but calcium-dependent gating is only effective when the size of the passing anion is bigger than the closed aperture. Mediates the calcium-activated hydrogencarbonate movement and participates in colonic hydrogencarbonate secretion concomitant with mucin secretion. In non-pigmented epithelium (NPE), mediates the efflux of intracellular L-glutamate; binding of intracellular L-glutamate activates and open both the neck and the aperture of the channel, leading to L-glutamate exit promoting chloride influx movement from the extracellular side in trans. Also exhibits a directional permeability for intracellular glutamine, in a similar manner as for L-glutamate. This is Bestrophin-2 from Bos taurus (Bovine).